The chain runs to 452 residues: Adenylosuccinate synthetase (452 aa).

GTP contacts are provided by residues Gly-40–Lys-46 and Gly-68–Thr-70. Catalysis depends on Asp-41, which acts as the Proton acceptor. Positions 41 and 68 each coordinate Mg(2+). Residues Asp-41–Lys-44, Asn-66–His-69, Thr-158, Arg-172, Asn-250, Thr-265, and Arg-329 contribute to the IMP site. His-69 functions as the Proton donor in the catalytic mechanism. A substrate-binding site is contributed by Val-325–Arg-331. Residues Arg-331, Lys-357–Asp-359, and Gly-440–Gly-442 contribute to the GTP site.

The protein belongs to the adenylosuccinate synthetase family. As to quaternary structure, homodimer. Requires Mg(2+) as cofactor.

The protein resides in the cytoplasm. The catalysed reaction is IMP + L-aspartate + GTP = N(6)-(1,2-dicarboxyethyl)-AMP + GDP + phosphate + 2 H(+). It functions in the pathway purine metabolism; AMP biosynthesis via de novo pathway; AMP from IMP: step 1/2. Functionally, plays an important role in the de novo pathway and in the salvage pathway of purine nucleotide biosynthesis. Catalyzes the first committed step in the biosynthesis of AMP from IMP. The polypeptide is Adenylosuccinate synthetase (Drosophila grimshawi (Hawaiian fruit fly)).